Here is a 273-residue protein sequence, read N- to C-terminus: Hydroxyethylthiazole kinase (273 aa).

M49 is a binding site for substrate. Residues K125 and T171 each coordinate ATP. Position 198 (G198) interacts with substrate.

Belongs to the Thz kinase family. Mg(2+) serves as cofactor.

It catalyses the reaction 5-(2-hydroxyethyl)-4-methylthiazole + ATP = 4-methyl-5-(2-phosphooxyethyl)-thiazole + ADP + H(+). The protein operates within cofactor biosynthesis; thiamine diphosphate biosynthesis; 4-methyl-5-(2-phosphoethyl)-thiazole from 5-(2-hydroxyethyl)-4-methylthiazole: step 1/1. In terms of biological role, catalyzes the phosphorylation of the hydroxyl group of 4-methyl-5-beta-hydroxyethylthiazole (THZ). This is Hydroxyethylthiazole kinase from Natranaerobius thermophilus (strain ATCC BAA-1301 / DSM 18059 / JW/NM-WN-LF).